Here is a 252-residue protein sequence, read N- to C-terminus: Uracil-DNA glycosylase (252 aa).

The active-site Proton acceptor is the aspartate 87.

Belongs to the uracil-DNA glycosylase (UDG) superfamily. UNG family.

It localises to the host nucleus. The enzyme catalyses Hydrolyzes single-stranded DNA or mismatched double-stranded DNA and polynucleotides, releasing free uracil.. In terms of biological role, excises uracil residues from the DNA which can arise as a result of misincorporation of dUMP residues by DNA polymerase or deamination of cytosines. Therefore may reduce deleterious uracil incorporation into the viral genome, particularly in terminally differentiated cells which lack DNA repair enzymes. This chain is Uracil-DNA glycosylase (46), found in Alcelaphine herpesvirus 1 (strain C500) (AlHV-1).